A 295-amino-acid polypeptide reads, in one-letter code: Protoheme IX farnesyltransferase (295 aa).

A run of 9 helical transmembrane segments spans residues 9–29 (ITKPGIIFGNVLSVAGGFFLA), 36–56 (FGVFLAAVIGTSLVVASGCVF), 80–100 (LVSLKLALLYATILGVAGVAL), 108–128 (LAALFAVIGFVIYVGLYSLYL), 135–155 (GTLVGSLSGAMPPVIGYCAVT), 163–183 (LTLLVMFSLWQMPHSYAIAIF), 209–229 (IMLYILAFLVATLMLTVGGYA), 230–250 (GLNYLAVAAGMGMYWLYMAWK), and 265–285 (FVFSIFTITALSVMMSVDFQV).

It belongs to the UbiA prenyltransferase family. Protoheme IX farnesyltransferase subfamily.

It is found in the cell inner membrane. It carries out the reaction heme b + (2E,6E)-farnesyl diphosphate + H2O = Fe(II)-heme o + diphosphate. It participates in porphyrin-containing compound metabolism; heme O biosynthesis; heme O from protoheme: step 1/1. In terms of biological role, converts heme B (protoheme IX) to heme O by substitution of the vinyl group on carbon 2 of heme B porphyrin ring with a hydroxyethyl farnesyl side group. This chain is Protoheme IX farnesyltransferase, found in Pseudomonas savastanoi pv. phaseolicola (strain 1448A / Race 6) (Pseudomonas syringae pv. phaseolicola (strain 1448A / Race 6)).